Consider the following 617-residue polypeptide: RNA polymerase sigma factor RpoD (617 aa).

The disordered stretch occupies residues 192–222 (NITNDSNENEDENEDENEDEDENSIDPELAN). The segment covering 198 to 216 (NENEDENEDENEDEDENSI) has biased composition (acidic residues). Residues 383 to 453 (MVEANLRLVI…TRSIADQART (71 aa)) form a sigma-70 factor domain-2 region. An Interaction with polymerase core subunit RpoC motif is present at residues 407-410 (DLIQ). Residues 462–538 (ETINKLNRIS…DTTLELPLDS (77 aa)) form a sigma-70 factor domain-3 region. Positions 551–604 (VLSGLTAREAKVLRMRFGIDMNTDHTLEEVGKQFDVTRERIRQIEAKALRKLRH) are sigma-70 factor domain-4. The segment at residues 577–596 (LEEVGKQFDVTRERIRQIEA) is a DNA-binding region (H-T-H motif).

This sequence belongs to the sigma-70 factor family. RpoD/SigA subfamily. Interacts transiently with the RNA polymerase catalytic core.

The protein localises to the cytoplasm. Functionally, sigma factors are initiation factors that promote the attachment of RNA polymerase to specific initiation sites and are then released. This sigma factor is the primary sigma factor during exponential growth. This chain is RNA polymerase sigma factor RpoD, found in Buchnera aphidicola subsp. Schizaphis graminum (strain Sg).